Here is a 524-residue protein sequence, read N- to C-terminus: Anthranilate synthase component 1 (524 aa).

L-tryptophan contacts are provided by residues serine 55 and 297-299; that span reads PYM. A chorismate-binding site is contributed by 332 to 333; it reads GT. Glutamate 359 contributes to the Mg(2+) binding site. Chorismate is bound by residues tyrosine 447, arginine 467, 485–487, and glycine 487; that span reads GAG. Glutamate 500 serves as a coordination point for Mg(2+).

It belongs to the anthranilate synthase component I family. In terms of assembly, heterotetramer consisting of two non-identical subunits: a beta subunit (TrpG) and a large alpha subunit (TrpE). The cofactor is Mg(2+).

It catalyses the reaction chorismate + L-glutamine = anthranilate + pyruvate + L-glutamate + H(+). It participates in amino-acid biosynthesis; L-tryptophan biosynthesis; L-tryptophan from chorismate: step 1/5. Feedback inhibited by tryptophan. In terms of biological role, part of a heterotetrameric complex that catalyzes the two-step biosynthesis of anthranilate, an intermediate in the biosynthesis of L-tryptophan. In the first step, the glutamine-binding beta subunit (TrpG) of anthranilate synthase (AS) provides the glutamine amidotransferase activity which generates ammonia as a substrate that, along with chorismate, is used in the second step, catalyzed by the large alpha subunit of AS (TrpE) to produce anthranilate. In the absence of TrpG, TrpE can synthesize anthranilate directly from chorismate and high concentrations of ammonia. The chain is Anthranilate synthase component 1 (trpE) from Haloferax volcanii (strain ATCC 29605 / DSM 3757 / JCM 8879 / NBRC 14742 / NCIMB 2012 / VKM B-1768 / DS2) (Halobacterium volcanii).